The chain runs to 157 residues: Catabolic 3-dehydroquinase (157 aa).

Residue Tyr27 is the Proton acceptor of the active site. Positions 80, 86, and 93 each coordinate substrate. Catalysis depends on His106, which acts as the Proton donor. Substrate-binding positions include Val107–Ser108 and Arg117.

This sequence belongs to the type-II 3-dehydroquinase family. Homododecamer. Adopts a ring-like structure, composed of an arrangement of two hexameric rings stacked on top of one another.

It catalyses the reaction 3-dehydroquinate = 3-dehydroshikimate + H2O. It participates in aromatic compound metabolism; 3,4-dihydroxybenzoate biosynthesis; 3,4-dihydroxybenzoate from 3-dehydroquinate: step 1/2. Is involved in the catabolism of quinate. Allows the utilization of quinate as carbon source via the beta-ketoadipate pathway. The sequence is that of Catabolic 3-dehydroquinase from Pyricularia oryzae (strain 70-15 / ATCC MYA-4617 / FGSC 8958) (Rice blast fungus).